Here is a 484-residue protein sequence, read N- to C-terminus: Probable cytochrome P450 555A1 (484 aa).

Residues 1 to 21 form a helical membrane-spanning segment; that stretch reads MIIIVIVVFLFYFSFLNLNLN. Cys-432 serves as a coordination point for heme.

This sequence belongs to the cytochrome P450 family. The cofactor is heme.

Its subcellular location is the membrane. The chain is Probable cytochrome P450 555A1 (cyp555A1) from Dictyostelium discoideum (Social amoeba).